Reading from the N-terminus, the 995-residue chain is UPF0182 protein NFA_45260 (995 aa).

A run of 7 helical transmembrane segments spans residues 18–38 (VLLVAAVVLAALLLLGPRFTD), 63–83 (IILFAAVALFVGATVWLALLL), 115–135 (FGIGIPVLLGLLAGLVAQSNW), 176–196 (FVAVVIAFFASLVTHYIFGGL), 211–231 (IQLAVIAGLFVLLKAVAYWFD), 260–280 (KLILLAIAVICAVAFFAGVVL), and 288–308 (MAAALLVLSSVLVGAVYPLVV). Residues 904–957 (ATPFGGDPATRPQPGTAPPVVDSTQPPADGGTPQPQTTPPPTGSAAKDAAAAEL) form a disordered region. 2 stretches are compositionally biased toward low complexity: residues 927 to 938 (TQPPADGGTPQP) and 946 to 955 (GSAAKDAAAA).

Belongs to the UPF0182 family.

The protein resides in the cell membrane. The sequence is that of UPF0182 protein NFA_45260 from Nocardia farcinica (strain IFM 10152).